The sequence spans 146 residues: Extracellular globin-2A (146 aa).

Residues 4–146 (HCGPLQRLKV…EVIYPGIKHD (143 aa)) enclose the Globin domain. Cys-5 and Cys-134 are disulfide-bonded. His-97 lines the heme b pocket.

Belongs to the globin family. In terms of assembly, disulfide bonded trimer of chains IIA, IIB, and IIC.

The chain is Extracellular globin-2A from Tylorrhynchus heterochetus (Japanese palolo worm).